A 335-amino-acid polypeptide reads, in one-letter code: DNA-directed RNA polymerase subunit alpha (335 aa).

Residues 1–233 (MIRDKISVSI…DLFIPFLHGE (233 aa)) are alpha N-terminal domain (alpha-NTD). An alpha C-terminal domain (alpha-CTD) region spans residues 264–335 (KEKIAFKHIF…KRFAIDPPRN (72 aa)).

This sequence belongs to the RNA polymerase alpha chain family. In plastids the minimal PEP RNA polymerase catalytic core is composed of four subunits: alpha, beta, beta', and beta''. When a (nuclear-encoded) sigma factor is associated with the core the holoenzyme is formed, which can initiate transcription.

The protein resides in the plastid. It is found in the chloroplast. It carries out the reaction RNA(n) + a ribonucleoside 5'-triphosphate = RNA(n+1) + diphosphate. Functionally, DNA-dependent RNA polymerase catalyzes the transcription of DNA into RNA using the four ribonucleoside triphosphates as substrates. The chain is DNA-directed RNA polymerase subunit alpha from Pinus koraiensis (Korean pine).